The following is a 107-amino-acid chain: uncharacterized protein (107 aa).

In terms of domain architecture, HTH cro/C1-type spans 13 to 68 (LQEEFLEPLSLKISDLAQILDVHRNTASNIVNNSSRITLEMAVKLAKVFDTTPEFW). The segment at residues 24–43 (KISDLAQILDVHRNTASNIV) is a DNA-binding region (H-T-H motif).

It belongs to the VapA/VapI family.

This is an uncharacterized protein from Haemophilus influenzae (strain ATCC 51907 / DSM 11121 / KW20 / Rd).